Consider the following 225-residue polypeptide: 2-C-methyl-D-erythritol 4-phosphate cytidylyltransferase (225 aa).

The protein belongs to the IspD/TarI cytidylyltransferase family. IspD subfamily.

It catalyses the reaction 2-C-methyl-D-erythritol 4-phosphate + CTP + H(+) = 4-CDP-2-C-methyl-D-erythritol + diphosphate. It functions in the pathway isoprenoid biosynthesis; isopentenyl diphosphate biosynthesis via DXP pathway; isopentenyl diphosphate from 1-deoxy-D-xylulose 5-phosphate: step 2/6. Its function is as follows. Catalyzes the formation of 4-diphosphocytidyl-2-C-methyl-D-erythritol from CTP and 2-C-methyl-D-erythritol 4-phosphate (MEP). In Haemophilus influenzae (strain PittGG), this protein is 2-C-methyl-D-erythritol 4-phosphate cytidylyltransferase.